Here is an 847-residue protein sequence, read N- to C-terminus: Beta-hexosaminidase (847 aa).

Intrachain disulfides connect cysteine 31–cysteine 40, cysteine 377–cysteine 385, and cysteine 484–cysteine 530. Glutamate 519 serves as the catalytic Proton donor.

This sequence belongs to the glycosyl hydrolase 20 family.

The enzyme catalyses Hydrolysis of terminal non-reducing N-acetyl-D-hexosamine residues in N-acetyl-beta-D-hexosaminides.. It participates in glycan degradation; chitin degradation. Hydrolysis of terminal, non-reducing N-acetyl-beta-D-glucosamine residues in chitobiose and higher analogs, and in glycoproteins. This is Beta-hexosaminidase (hex) from Vibrio vulnificus.